The chain runs to 194 residues: dCTP deaminase (194 aa).

DCTP is bound by residues 110-115, D128, 136-138, Y171, K178, and Q182; these read RSSLAR and VLE. E138 functions as the Proton donor/acceptor in the catalytic mechanism.

Belongs to the dCTP deaminase family. Homotrimer.

It carries out the reaction dCTP + H2O + H(+) = dUTP + NH4(+). Its pathway is pyrimidine metabolism; dUMP biosynthesis; dUMP from dCTP (dUTP route): step 1/2. Catalyzes the deamination of dCTP to dUTP. This chain is dCTP deaminase, found in Glaesserella parasuis serovar 5 (strain SH0165) (Haemophilus parasuis).